We begin with the raw amino-acid sequence, 304 residues long: tRNA uridine(34) hydroxylase (304 aa).

Residues 124–219 form the Rhodanese domain; the sequence is QDEETLLIDT…YLETIPKEES (96 aa). The active-site Cysteine persulfide intermediate is cysteine 179.

This sequence belongs to the TrhO family.

It carries out the reaction uridine(34) in tRNA + AH2 + O2 = 5-hydroxyuridine(34) in tRNA + A + H2O. Functionally, catalyzes oxygen-dependent 5-hydroxyuridine (ho5U) modification at position 34 in tRNAs. In Bartonella quintana (strain Toulouse) (Rochalimaea quintana), this protein is tRNA uridine(34) hydroxylase.